The sequence spans 158 residues: 6,7-dimethyl-8-ribityllumazine synthase (158 aa).

5-amino-6-(D-ribitylamino)uracil is bound by residues phenylalanine 22, 57-59 (AVE), and 81-83 (AVI). 86-87 (GT) serves as a coordination point for (2S)-2-hydroxy-3-oxobutyl phosphate. The active-site Proton donor is the histidine 89. 5-amino-6-(D-ribitylamino)uracil is bound at residue phenylalanine 114. A (2S)-2-hydroxy-3-oxobutyl phosphate-binding site is contributed by arginine 128.

It belongs to the DMRL synthase family. In terms of assembly, forms an icosahedral capsid composed of 60 subunits, arranged as a dodecamer of pentamers.

The enzyme catalyses (2S)-2-hydroxy-3-oxobutyl phosphate + 5-amino-6-(D-ribitylamino)uracil = 6,7-dimethyl-8-(1-D-ribityl)lumazine + phosphate + 2 H2O + H(+). It participates in cofactor biosynthesis; riboflavin biosynthesis; riboflavin from 2-hydroxy-3-oxobutyl phosphate and 5-amino-6-(D-ribitylamino)uracil: step 1/2. Catalyzes the formation of 6,7-dimethyl-8-ribityllumazine by condensation of 5-amino-6-(D-ribitylamino)uracil with 3,4-dihydroxy-2-butanone 4-phosphate. This is the penultimate step in the biosynthesis of riboflavin. This is 6,7-dimethyl-8-ribityllumazine synthase from Shewanella oneidensis (strain ATCC 700550 / JCM 31522 / CIP 106686 / LMG 19005 / NCIMB 14063 / MR-1).